Here is a 380-residue protein sequence, read N- to C-terminus: Cytochrome b (380 aa).

The next 4 helical transmembrane spans lie at 34–54, 78–99, 114–134, and 179–199; these read FGSL…LLAM, WLIR…FLHI, WNTG…GYVL, and FFAL…THLM. Heme b contacts are provided by His84 and His98. His183 and His197 together coordinate heme b. His202 is a binding site for a ubiquinone. The next 4 helical transmembrane spans lie at 227–247, 289–309, 321–341, and 348–368; these read LKDI…ALFS, LGGV…PFLH, LSQA…WVGS, and FIII…ILFP.

It belongs to the cytochrome b family. The cytochrome bc1 complex contains 11 subunits: 3 respiratory subunits (MT-CYB, CYC1 and UQCRFS1), 2 core proteins (UQCRC1 and UQCRC2) and 6 low-molecular weight proteins (UQCRH/QCR6, UQCRB/QCR7, UQCRQ/QCR8, UQCR10/QCR9, UQCR11/QCR10 and a cleavage product of UQCRFS1). This cytochrome bc1 complex then forms a dimer. It depends on heme b as a cofactor.

It is found in the mitochondrion inner membrane. Functionally, component of the ubiquinol-cytochrome c reductase complex (complex III or cytochrome b-c1 complex) that is part of the mitochondrial respiratory chain. The b-c1 complex mediates electron transfer from ubiquinol to cytochrome c. Contributes to the generation of a proton gradient across the mitochondrial membrane that is then used for ATP synthesis. This is Cytochrome b (MT-CYB) from Syrmaticus reevesii (Reeves's pheasant).